Consider the following 316-residue polypeptide: Protoheme IX farnesyltransferase (316 aa).

8 helical membrane-spanning segments follow: residues Val35 to Gln55, Pro56 to Leu76, Val119 to Phe139, Ile156 to Gly176, Leu183 to Ile203, Ile229 to Leu246, Gly250 to Leu272, and Ala283 to Leu303.

This sequence belongs to the UbiA prenyltransferase family. Protoheme IX farnesyltransferase subfamily.

The protein resides in the cell inner membrane. The enzyme catalyses heme b + (2E,6E)-farnesyl diphosphate + H2O = Fe(II)-heme o + diphosphate. Its pathway is porphyrin-containing compound metabolism; heme O biosynthesis; heme O from protoheme: step 1/1. Functionally, converts heme B (protoheme IX) to heme O by substitution of the vinyl group on carbon 2 of heme B porphyrin ring with a hydroxyethyl farnesyl side group. This chain is Protoheme IX farnesyltransferase, found in Methylobacterium radiotolerans (strain ATCC 27329 / DSM 1819 / JCM 2831 / NBRC 15690 / NCIMB 10815 / 0-1).